The primary structure comprises 598 residues: Proline--tRNA ligase (598 aa).

The protein belongs to the class-II aminoacyl-tRNA synthetase family. ProS type 1 subfamily. As to quaternary structure, homodimer.

Its subcellular location is the cytoplasm. It catalyses the reaction tRNA(Pro) + L-proline + ATP = L-prolyl-tRNA(Pro) + AMP + diphosphate. Its function is as follows. Catalyzes the attachment of proline to tRNA(Pro) in a two-step reaction: proline is first activated by ATP to form Pro-AMP and then transferred to the acceptor end of tRNA(Pro). As ProRS can inadvertently accommodate and process non-cognate amino acids such as alanine and cysteine, to avoid such errors it has two additional distinct editing activities against alanine. One activity is designated as 'pretransfer' editing and involves the tRNA(Pro)-independent hydrolysis of activated Ala-AMP. The other activity is designated 'posttransfer' editing and involves deacylation of mischarged Ala-tRNA(Pro). The misacylated Cys-tRNA(Pro) is not edited by ProRS. In Synechococcus sp. (strain CC9311), this protein is Proline--tRNA ligase.